Here is a 134-residue protein sequence, read N- to C-terminus: Transcription antitermination protein NusB (134 aa).

It belongs to the NusB family.

Functionally, involved in transcription antitermination. Required for transcription of ribosomal RNA (rRNA) genes. Binds specifically to the boxA antiterminator sequence of the ribosomal RNA (rrn) operons. This chain is Transcription antitermination protein NusB, found in Shewanella woodyi (strain ATCC 51908 / MS32).